The primary structure comprises 330 residues: Malate dehydrogenase (330 aa).

12 to 18 (GAAGQIG) serves as a coordination point for NAD(+). Substrate is bound by residues arginine 93 and arginine 99. Residues asparagine 106, glutamine 113, and 130–132 (VGN) each bind NAD(+). The substrate site is built by asparagine 132 and arginine 163. Histidine 188 (proton acceptor) is an active-site residue.

This sequence belongs to the LDH/MDH superfamily. MDH type 2 family.

The catalysed reaction is (S)-malate + NAD(+) = oxaloacetate + NADH + H(+). In terms of biological role, catalyzes the reversible oxidation of malate to oxaloacetate. In Legionella pneumophila (strain Lens), this protein is Malate dehydrogenase.